A 183-amino-acid polypeptide reads, in one-letter code: Adenylate kinase (183 aa).

7 to 15 (GVAGVGKTT) serves as a coordination point for ATP.

Belongs to the archaeal adenylate kinase family.

It is found in the cytoplasm. It carries out the reaction AMP + ATP = 2 ADP. The polypeptide is Adenylate kinase (adkA) (Thermoplasma acidophilum (strain ATCC 25905 / DSM 1728 / JCM 9062 / NBRC 15155 / AMRC-C165)).